Consider the following 145-residue polypeptide: D-aminoacyl-tRNA deacylase (145 aa).

Positions 137–138 (GP) match the Gly-cisPro motif, important for rejection of L-amino acids motif.

Belongs to the DTD family. Homodimer.

It localises to the cytoplasm. It catalyses the reaction glycyl-tRNA(Ala) + H2O = tRNA(Ala) + glycine + H(+). The enzyme catalyses a D-aminoacyl-tRNA + H2O = a tRNA + a D-alpha-amino acid + H(+). Functionally, an aminoacyl-tRNA editing enzyme that deacylates mischarged D-aminoacyl-tRNAs. Also deacylates mischarged glycyl-tRNA(Ala), protecting cells against glycine mischarging by AlaRS. Acts via tRNA-based rather than protein-based catalysis; rejects L-amino acids rather than detecting D-amino acids in the active site. By recycling D-aminoacyl-tRNA to D-amino acids and free tRNA molecules, this enzyme counteracts the toxicity associated with the formation of D-aminoacyl-tRNA entities in vivo and helps enforce protein L-homochirality. The polypeptide is D-aminoacyl-tRNA deacylase (Proteus mirabilis (strain HI4320)).